A 447-amino-acid polypeptide reads, in one-letter code: Peptide chain release factor 1, mitochondrial (447 aa).

A mitochondrion-targeting transit peptide spans 1-63; the sequence is MNRRHLFAWL…LLNKNCSRRY (63 aa). The interval 299-363 is GGQ domain; that stretch reads PKDLRIDTFR…LRARLYQQII (65 aa). Positions 313–315 match the GGQ motif; sequence GGQ. Gln-315 is modified (N5-methylglutamine).

The protein belongs to the prokaryotic/mitochondrial release factor family. In terms of processing, methylation of glutamine in the GGQ triplet by HEMK1 is conserved from bacteria to mammals.

It is found in the mitochondrion. Mitochondrial peptide chain release factor that directs the termination of translation in response to the peptide chain non-canonical stop codons AGG and AGA. Non-canonical termination codons AGG and AGA are found at the end of MT-CO1/COX1 and MT-ND6/ND6 open reading frames, respectively. Recognizes non-canonical stop codons via a network of interactions between the codon, MTRF1 and the ribosomal RNA (rRNA): in contrast to other translation release factors, which identify the codon in the A-site via direct interactions of amino acid side chains with the bases, MTRF1 repositions the first 2 bases of the stop codon to use an intricate network of interactions that includes residues of the release factor, the rRNA of the small ribosomal subunit, as well as neighboring bases of the mRNA. This chain is Peptide chain release factor 1, mitochondrial (MTRF1), found in Bos taurus (Bovine).